The chain runs to 301 residues: Probable actin-related protein 2/3 complex subunit 2 (301 aa).

The protein belongs to the ARPC2 family. Component of the Arp2/3 complex, at least composed of arx-1, arx-2, arx-4 and arx-6.

It is found in the cytoplasm. It localises to the cytoskeleton. Its function is as follows. Functions as actin-binding component of the Arp2/3 complex which is involved in regulation of actin polymerization and together with an activating nucleation-promoting factor (NPF) mediates the formation of branched actin networks. Seems to contact the mother actin filament. Plays a role in time-dependent memory loss and the retention of conditioned behavior over time. This chain is Probable actin-related protein 2/3 complex subunit 2, found in Caenorhabditis elegans.